A 470-amino-acid chain; its full sequence is Calcitonin gene-related peptide type 1 receptor (470 aa).

A signal peptide spans Met1–Ala23. At Ser24–Met147 the chain is on the extracellular side. Asn28, Asn74, Asn126, and Asn131 each carry an N-linked (GlcNAc...) asparagine glycan. 3 disulfides stabilise this stretch: Cys56/Cys82, Cys73/Cys113, and Cys96/Cys135. Residues Asn148–Phe172 form a helical membrane-spanning segment. The Cytoplasmic portion of the chain corresponds to His173 to Thr183. Residues Leu184–Val206 form a helical membrane-spanning segment. Over Ala207–Pro217 the chain is Extracellular. Residues Ile218 to His246 traverse the membrane as a helical segment. Topologically, residues Thr247–Leu260 are cytoplasmic. A helical membrane pass occupies residues Met261–Ala281. At Arg282–Ser297 the chain is on the extracellular side. Asn295 carries N-linked (GlcNAc...) asparagine glycosylation. The helical transmembrane segment at Leu298–Arg322 threads the bilayer. Topologically, residues Val323–Ser337 are cytoplasmic. Residues Leu338 to Leu359 traverse the membrane as a helical segment. Topologically, residues Leu360–Asp374 are extracellular. Residues Tyr375–Phe395 form a helical membrane-spanning segment. Topologically, residues Asn396 to Ala470 are cytoplasmic.

Belongs to the G-protein coupled receptor 2 family.

The protein resides in the cell membrane. Its function is as follows. May function as G protein-coupled receptor for calcitonin-gene-related peptides and adrenomedullin. Specificity may be modulated by accessory proteins. May activate cAMP-dependent pathway. The protein is Calcitonin gene-related peptide type 1 receptor (calcrla) of Danio rerio (Zebrafish).